Consider the following 361-residue polypeptide: Glutaminyl-peptide cyclotransferase (361 aa).

An N-terminal signal peptide occupies residues 1–28; that stretch reads MAGGRHRRVVGTLHLLLLVAALPWASRG. Residue asparagine 49 is glycosylated (N-linked (GlcNAc...) asparagine). Cysteine 139 and cysteine 164 form a disulfide bridge. Zn(2+) is bound at residue aspartate 159. Glutamate 201 functions as the Proton acceptor in the catalytic mechanism. Glutamate 202 is a binding site for Zn(2+). The Proton acceptor role is filled by aspartate 248. Asparagine 296 carries an N-linked (GlcNAc...) asparagine glycan. Zn(2+) is bound at residue histidine 330.

This sequence belongs to the glutaminyl-peptide cyclotransferase family.

It is found in the secreted. The catalysed reaction is N-terminal L-glutaminyl-[peptide] = N-terminal 5-oxo-L-prolyl-[peptide] + NH4(+). Responsible for the biosynthesis of pyroglutamyl peptides. Has a bias against acidic and tryptophan residues adjacent to the N-terminal glutaminyl residue and a lack of importance of chain length after the second residue. Also catalyzes N-terminal pyroglutamate formation. In vitro, catalyzes pyroglutamate formation of N-terminally truncated form of APP amyloid-beta peptides [Glu-3]-amyloid-beta. May be involved in the N-terminal pyroglutamate formation of several amyloid-related plaque-forming peptides. This Homo sapiens (Human) protein is Glutaminyl-peptide cyclotransferase (QPCT).